The following is a 207-amino-acid chain: Dephospho-CoA kinase (207 aa).

Residues 10-207 (ILGLTGGIGS…FYLTLRGGQS (198 aa)) form the DPCK domain. 18–23 (GSGKSA) serves as a coordination point for ATP.

The protein belongs to the CoaE family.

Its subcellular location is the cytoplasm. It carries out the reaction 3'-dephospho-CoA + ATP = ADP + CoA + H(+). The protein operates within cofactor biosynthesis; coenzyme A biosynthesis; CoA from (R)-pantothenate: step 5/5. Catalyzes the phosphorylation of the 3'-hydroxyl group of dephosphocoenzyme A to form coenzyme A. This Pseudomonas syringae pv. tomato (strain ATCC BAA-871 / DC3000) protein is Dephospho-CoA kinase.